The primary structure comprises 231 residues: GFP-like fluorescent chromoprotein FP506 (231 aa).

The segment at residues 66–68 (NYG) is a cross-link (5-imidazolinone (Asn-Gly)). Tyr-67 carries the 2,3-didehydrotyrosine modification.

The protein belongs to the GFP family. In terms of processing, contains a chromophore consisting of modified amino acid residues. The chromophore is formed by autocatalytic backbone condensation between Xaa-N and Gly-(N+2), and oxidation of Tyr-(N+1) to didehydrotyrosine. Maturation of the chromophore requires nothing other than molecular oxygen. The precise stereochemistry of the tyrosine has not been determined. As to expression, tentacle and oral disk.

In terms of biological role, pigment protein that is yellow-green in color. This Zoanthus sp. (Green polyp) protein is GFP-like fluorescent chromoprotein FP506.